The following is a 658-amino-acid chain: Threonine--tRNA ligase (658 aa).

A TGS domain is found at 1–64; sequence MSNTVSLQFP…GASGKVEIIT (64 aa). Residues 246–548 are catalytic; it reads DHRRLGREMD…LIENFAGHMP (303 aa). Residues Cys343, His394, and His525 each contribute to the Zn(2+) site.

It belongs to the class-II aminoacyl-tRNA synthetase family. Homodimer. Zn(2+) is required as a cofactor.

Its subcellular location is the cytoplasm. The enzyme catalyses tRNA(Thr) + L-threonine + ATP = L-threonyl-tRNA(Thr) + AMP + diphosphate + H(+). Catalyzes the attachment of threonine to tRNA(Thr) in a two-step reaction: L-threonine is first activated by ATP to form Thr-AMP and then transferred to the acceptor end of tRNA(Thr). Also edits incorrectly charged L-seryl-tRNA(Thr). The chain is Threonine--tRNA ligase from Brucella melitensis biotype 2 (strain ATCC 23457).